The chain runs to 242 residues: E3 ubiquitin-protein ligase AIRP2 (242 aa).

Residues 146–184 form an RING-type zinc finger; that stretch reads CGICLEIRNKVVLPTCNHSMCINCYRNWRARSQSCPFCR.

As to quaternary structure, interacts with ATP1/SDIRIP1. Expressed in germinating seeds, flower organs and siliques.

The protein localises to the cytoplasm. It localises to the cytosol. It carries out the reaction S-ubiquitinyl-[E2 ubiquitin-conjugating enzyme]-L-cysteine + [acceptor protein]-L-lysine = [E2 ubiquitin-conjugating enzyme]-L-cysteine + N(6)-ubiquitinyl-[acceptor protein]-L-lysine.. Functionally, possesses E3 ubiquitin-protein ligase activity in vitro when associated with the E2 enzyme UBC8 in vitro. Plays combinatory roles with AIRP1 in the positive regulation of the abscisic acid-mediated drought stress response. Plays a positive role in abscisic acid- and high salinity-regulated seed germination through the ubiquitin-proteasome-dependent down-regulation of ATP1/SDIRIP1. The chain is E3 ubiquitin-protein ligase AIRP2 from Arabidopsis thaliana (Mouse-ear cress).